The chain runs to 638 residues: Broad-specificity ulvan lyase (638 aa).

The N-terminal stretch at 1–27 (MKRRNFIQLSSLATIGMSLPSAGIVNA) is a signal peptide.

Belongs to the polysaccharide lyase 37 family.

It is found in the periplasm. The enzyme catalyses Endolytic cleavage of (1-&gt;4)-beta-galactosaminic bonds between N-acetylgalactosamine and either D-glucuronic acid or L-iduronic acid to produce a mixture of Delta(4)-unsaturated oligosaccharides of different sizes that are ultimately degraded to Delta(4)-unsaturated tetra- and disaccharides.. It carries out the reaction Elimination of sulfate, appears to act on linkages between N-acetyl-D-glucosamine and uronate. Product is an unsaturated sugar.. Functionally, broad-specificity lyase involved in ulvan degradation. Ulvan is the main polysaccharide component of the Ulvales (green seaweed) cell wall. It is composed of disaccharide building blocks comprising 3-sulfated rhamnose (Rha3S) linked to D-glucuronic acid (GlcA), L-iduronic acid (IduA), or D-xylose (Xyl). Ulvan lyase catalyzes the endolytic cleavage of the glycosidic bond between Rha3S and the uronic acids GlcA or IduA, producing oligosaccharides that have unsaturated 4-deoxy-L-threo-hex-4-enopyranosiduronic acid (deltaUA) at the non-reducing end. This results eventually in the degradation of the ulvan polysaccharide into deltaUA-Rha3S disaccharides and deltaUA-Rha3S-Xyl-Rha3S tetrasaccharides. It is also able to degrade the glycosaminoglycans heparan sulfate and chondroitin sulfate. Not active against pectin, xanthan or alginate. This Formosa agariphila (strain DSM 15362 / KCTC 12365 / LMG 23005 / KMM 3901 / M-2Alg 35-1) protein is Broad-specificity ulvan lyase.